The chain runs to 113 residues: Cell cycle protein GpsB (113 aa).

A coiled-coil region spans residues 32-71 (LDNVIKDYESFTKDNQQLSDENERLRAKVDELTKQVAVGA).

This sequence belongs to the GpsB family. As to quaternary structure, forms polymers through the coiled coil domains. Interacts with PBP1, MreC and EzrA.

The protein localises to the cytoplasm. Its function is as follows. Divisome component that associates with the complex late in its assembly, after the Z-ring is formed, and is dependent on DivIC and PBP2B for its recruitment to the divisome. Together with EzrA, is a key component of the system that regulates PBP1 localization during cell cycle progression. Its main role could be the removal of PBP1 from the cell pole after pole maturation is completed. Also contributes to the recruitment of PBP1 to the division complex. Not essential for septum formation. The polypeptide is Cell cycle protein GpsB (Lactiplantibacillus plantarum (strain ATCC BAA-793 / NCIMB 8826 / WCFS1) (Lactobacillus plantarum)).